The sequence spans 149 residues: 16.9 kDa class I heat shock protein 3 (149 aa).

Residues 35-149 form the sHSP domain; it reads DTAAFANARV…PEVKAIEISG (115 aa).

This sequence belongs to the small heat shock protein (HSP20) family. As to quaternary structure, may form oligomeric structures.

It is found in the cytoplasm. This Oryza sativa subsp. japonica (Rice) protein is 16.9 kDa class I heat shock protein 3 (HSP16.9C).